The chain runs to 284 residues: 4-diphosphocytidyl-2-C-methyl-D-erythritol kinase (284 aa).

Lys14 is an active-site residue. 98–108 (PMGGGLGGGSS) is a binding site for ATP. Residue Asp140 is part of the active site.

It belongs to the GHMP kinase family. IspE subfamily.

It catalyses the reaction 4-CDP-2-C-methyl-D-erythritol + ATP = 4-CDP-2-C-methyl-D-erythritol 2-phosphate + ADP + H(+). Its pathway is isoprenoid biosynthesis; isopentenyl diphosphate biosynthesis via DXP pathway; isopentenyl diphosphate from 1-deoxy-D-xylulose 5-phosphate: step 3/6. Functionally, catalyzes the phosphorylation of the position 2 hydroxy group of 4-diphosphocytidyl-2C-methyl-D-erythritol. This chain is 4-diphosphocytidyl-2-C-methyl-D-erythritol kinase, found in Shewanella sp. (strain ANA-3).